The sequence spans 134 residues: Syncollin (134 aa).

An N-terminal signal peptide occupies residues 1 to 21 (MSPLCLLLLALALVAVPGARG).

Monomer and homooligomer; most probably hexameric. Interacts with GP2. According to PubMed:10753942 interaction with syntaxins shown in PubMed:9244306 is physiologically questionable. Contains intrachain disulfide bonds. Specifically expressed in pancreas and also detected in secretory granules of parotid gland (at protein level). Expressed in pancreas, spleen, small intestine, lung and neutrophilic granulocytes (at protein level). Expressed by epithelial cells in duodenum and colon.

It is found in the zymogen granule membrane. It localises to the zymogen granule lumen. Functions in exocytosis in pancreatic acinar cells regulating the fusion of zymogen granules with each other. May have a pore-forming activity on membranes and regulate exocytosis in other exocrine tissues. The sequence is that of Syncollin (Sycn) from Rattus norvegicus (Rat).